A 471-amino-acid chain; its full sequence is Putative multidrug resistance protein MdtD (471 aa).

The Periplasmic portion of the chain corresponds to 1–11 (MTDLPDSTRWQ). A helical transmembrane segment spans residues 12 to 32 (LWIVAFGFFMQSLDTTIVNTA). Residues 33 to 48 (LPSMAQSLGESPLHMH) lie on the Cytoplasmic side of the membrane. The chain crosses the membrane as a helical span at residues 49–69 (MVIVSYVLTVAVMLPASGWLA). Over 70-76 (DKVGVRN) the chain is Periplasmic. Residues 77-97 (IFFTAIVLFTLGSLFCALSGT) form a helical membrane-spanning segment. The Cytoplasmic segment spans residues 98-101 (LNEL). A helical transmembrane segment spans residues 102-124 (LLARALQGVGGAMMVPVGRLTVM). Residues 125 to 137 (KIVPREQYMAAMT) lie on the Periplasmic side of the membrane. A helical membrane pass occupies residues 138–158 (FVTLPGQVGPLLGPALGGLLV). At 159–164 (EYASWH) the chain is on the cytoplasmic side. The chain crosses the membrane as a helical span at residues 165 to 185 (WIFLINIPVGIIGAIATLMLM). The Periplasmic segment spans residues 186-196 (PNYTMQTRRFD). Residues 197–217 (LSGFLLLAVGMAVLTLALDGS) traverse the membrane as a helical segment. Over 218–224 (KGTGLSP) the chain is Cytoplasmic. Residues 225–245 (LAIAGLVAVGVVALVLYLLHA) form a helical membrane-spanning segment. Topologically, residues 246-262 (RNNNRALFSLKLFRTRT) are periplasmic. The helical transmembrane segment at 263–283 (FSLGLAGSFAGRIGSGMLPFM) threads the bilayer. The Cytoplasmic portion of the chain corresponds to 284–285 (TP). The chain crosses the membrane as a helical span at residues 286-306 (VFLQIGLGFSPFHAGLMMIPM). Residues 307–341 (VLGSMGMKRIVVQVVNRFGYRRVLVATTLGLSLVT) lie on the Periplasmic side of the membrane. The helical transmembrane segment at 342–362 (MLFMTTALLGWYYVLPFVLFL) threads the bilayer. At 363-395 (QGMVNSTRFSSMNTLTLKDLPDNLASSGNSLLS) the chain is on the cytoplasmic side. The chain crosses the membrane as a helical span at residues 396–416 (MIMQLSMSIGVTIAGLLLGLF). Residues 417 to 430 (GSQHVSVDSGTTQT) lie on the Periplasmic side of the membrane. The helical transmembrane segment at 431–451 (VFMYTWLSMAFIIALPAFIFA) threads the bilayer. Residues 452-471 (RVPNDTHQNVAISRRKRSAQ) are Cytoplasmic-facing.

It belongs to the major facilitator superfamily. TCR/Tet family.

It localises to the cell inner membrane. The sequence is that of Putative multidrug resistance protein MdtD from Escherichia coli O7:K1 (strain IAI39 / ExPEC).